The chain runs to 286 residues: NADPH-dependent 7-cyano-7-deazaguanine reductase (286 aa).

Ile-92–Ser-94 contacts substrate. Residue Ser-94–Lys-95 coordinates NADPH. Cys-194 (thioimide intermediate) is an active-site residue. The active-site Proton donor is Asp-201. Residue His-233–Glu-234 coordinates substrate. Arg-262–Gly-263 serves as a coordination point for NADPH.

It belongs to the GTP cyclohydrolase I family. QueF type 2 subfamily. As to quaternary structure, homodimer.

It localises to the cytoplasm. The catalysed reaction is 7-aminomethyl-7-carbaguanine + 2 NADP(+) = 7-cyano-7-deazaguanine + 2 NADPH + 3 H(+). It participates in tRNA modification; tRNA-queuosine biosynthesis. In terms of biological role, catalyzes the NADPH-dependent reduction of 7-cyano-7-deazaguanine (preQ0) to 7-aminomethyl-7-deazaguanine (preQ1). The chain is NADPH-dependent 7-cyano-7-deazaguanine reductase from Shewanella sp. (strain MR-7).